The sequence spans 456 residues: Bifunctional protein GlmU (456 aa).

Residues 1–231 are pyrophosphorylase; that stretch reads MERTCLAIIL…EEELTGCNTR (231 aa). Residues 10-13, K24, Q77, and 82-83 each bind UDP-N-acetyl-alpha-D-glucosamine; these read LAAG and GT. A Mg(2+)-binding site is contributed by D107. G143, E157, N172, and N229 together coordinate UDP-N-acetyl-alpha-D-glucosamine. N229 is a binding site for Mg(2+). A linker region spans residues 232–252; sequence AELAYIERLWQQRRRQELMLA. An N-acetyltransferase region spans residues 253 to 456; it reads GVSMVAPETV…AARKKVKAAE (204 aa). The UDP-N-acetyl-alpha-D-glucosamine site is built by R318 and K336. Catalysis depends on H348, which acts as the Proton acceptor. Positions 351 and 362 each coordinate UDP-N-acetyl-alpha-D-glucosamine. Acetyl-CoA contacts are provided by residues A365, 371–372, S390, S408, and R425; that span reads NY.

This sequence in the N-terminal section; belongs to the N-acetylglucosamine-1-phosphate uridyltransferase family. In the C-terminal section; belongs to the transferase hexapeptide repeat family. Homotrimer. Mg(2+) is required as a cofactor.

Its subcellular location is the cytoplasm. It catalyses the reaction alpha-D-glucosamine 1-phosphate + acetyl-CoA = N-acetyl-alpha-D-glucosamine 1-phosphate + CoA + H(+). The enzyme catalyses N-acetyl-alpha-D-glucosamine 1-phosphate + UTP + H(+) = UDP-N-acetyl-alpha-D-glucosamine + diphosphate. It functions in the pathway nucleotide-sugar biosynthesis; UDP-N-acetyl-alpha-D-glucosamine biosynthesis; N-acetyl-alpha-D-glucosamine 1-phosphate from alpha-D-glucosamine 6-phosphate (route II): step 2/2. It participates in nucleotide-sugar biosynthesis; UDP-N-acetyl-alpha-D-glucosamine biosynthesis; UDP-N-acetyl-alpha-D-glucosamine from N-acetyl-alpha-D-glucosamine 1-phosphate: step 1/1. Its pathway is bacterial outer membrane biogenesis; LPS lipid A biosynthesis. Its function is as follows. Catalyzes the last two sequential reactions in the de novo biosynthetic pathway for UDP-N-acetylglucosamine (UDP-GlcNAc). The C-terminal domain catalyzes the transfer of acetyl group from acetyl coenzyme A to glucosamine-1-phosphate (GlcN-1-P) to produce N-acetylglucosamine-1-phosphate (GlcNAc-1-P), which is converted into UDP-GlcNAc by the transfer of uridine 5-monophosphate (from uridine 5-triphosphate), a reaction catalyzed by the N-terminal domain. The chain is Bifunctional protein GlmU from Sinorhizobium fredii (strain NBRC 101917 / NGR234).